The chain runs to 755 residues: Photosystem I P700 chlorophyll a apoprotein A1 (755 aa).

The next 8 membrane-spanning stretches (helical) occupy residues 72-95 (IFSA…YHGA), 158-181 (LLCT…FHYH), 197-221 (LNHH…HVAI), 297-315 (QAHH…GHMY), 352-375 (WHAQ…QHMY), 391-417 (ISLF…IYMV), 439-461 (AIIS…FYVH), and 536-554 (FMVH…LILL). [4Fe-4S] cluster-binding residues include Cys578 and Cys587. The next 2 membrane-spanning stretches (helical) occupy residues 594 to 615 (HVFL…HFSW) and 669 to 691 (LSAY…MFLF). His680 lines the chlorophyll a' pocket. Residues Met688 and Tyr696 each contribute to the chlorophyll a site. Trp697 lines the phylloquinone pocket. The helical transmembrane segment at 729 to 749 (AVGVAHYLLGGIVTTWAFFLA) threads the bilayer.

It belongs to the PsaA/PsaB family. The PsaA/B heterodimer binds the P700 chlorophyll special pair and subsequent electron acceptors. PSI consists of a core antenna complex that captures photons, and an electron transfer chain that converts photonic excitation into a charge separation. The cyanobacterial PSI reaction center is composed of one copy each of PsaA,B,C,D,E,F,I,J,K,L,M and X, and forms trimeric complexes. It depends on PSI electron transfer chain: 5 chlorophyll a, 1 chlorophyll a', 2 phylloquinones and 3 4Fe-4S clusters. PSI core antenna: 90 chlorophyll a, 22 carotenoids, 3 phospholipids and 1 galactolipid. P700 is a chlorophyll a/chlorophyll a' dimer, A0 is one or more chlorophyll a, A1 is one or both phylloquinones and FX is a shared 4Fe-4S iron-sulfur center. as a cofactor.

Its subcellular location is the cellular thylakoid membrane. It carries out the reaction reduced [plastocyanin] + hnu + oxidized [2Fe-2S]-[ferredoxin] = oxidized [plastocyanin] + reduced [2Fe-2S]-[ferredoxin]. Its function is as follows. PsaA and PsaB bind P700, the primary electron donor of photosystem I (PSI), as well as the electron acceptors A0, A1 and FX. PSI is a plastocyanin/cytochrome c6-ferredoxin oxidoreductase, converting photonic excitation into a charge separation, which transfers an electron from the donor P700 chlorophyll pair to the spectroscopically characterized acceptors A0, A1, FX, FA and FB in turn. Oxidized P700 is reduced on the lumenal side of the thylakoid membrane by plastocyanin or cytochrome c6. This chain is Photosystem I P700 chlorophyll a apoprotein A1, found in Synechococcus sp. (strain JA-3-3Ab) (Cyanobacteria bacterium Yellowstone A-Prime).